The chain runs to 219 residues: ATP-dependent Clp protease proteolytic subunit 3 (219 aa).

The Nucleophile role is filled by Ser-112. Residue His-137 is part of the active site.

It belongs to the peptidase S14 family. Fourteen ClpP subunits assemble into 2 heptameric rings which stack back to back to give a disk-like structure with a central cavity, resembling the structure of eukaryotic proteasomes.

The protein resides in the cytoplasm. It catalyses the reaction Hydrolysis of proteins to small peptides in the presence of ATP and magnesium. alpha-casein is the usual test substrate. In the absence of ATP, only oligopeptides shorter than five residues are hydrolyzed (such as succinyl-Leu-Tyr-|-NHMec, and Leu-Tyr-Leu-|-Tyr-Trp, in which cleavage of the -Tyr-|-Leu- and -Tyr-|-Trp bonds also occurs).. Cleaves peptides in various proteins in a process that requires ATP hydrolysis. Has a chymotrypsin-like activity. Plays a major role in the degradation of misfolded proteins. The chain is ATP-dependent Clp protease proteolytic subunit 3 from Streptomyces avermitilis (strain ATCC 31267 / DSM 46492 / JCM 5070 / NBRC 14893 / NCIMB 12804 / NRRL 8165 / MA-4680).